Here is a 222-residue protein sequence, read N- to C-terminus: Phosphoribosylformylglycinamidine synthase subunit PurQ (222 aa).

The Glutamine amidotransferase type-1 domain occupies 3-222 (AAVVVFPGSN…RALAGALTPA (220 aa)). Cys-86 functions as the Nucleophile in the catalytic mechanism. Active-site residues include His-194 and Glu-196.

Part of the FGAM synthase complex composed of 1 PurL, 1 PurQ and 2 PurS subunits.

The protein localises to the cytoplasm. The catalysed reaction is N(2)-formyl-N(1)-(5-phospho-beta-D-ribosyl)glycinamide + L-glutamine + ATP + H2O = 2-formamido-N(1)-(5-O-phospho-beta-D-ribosyl)acetamidine + L-glutamate + ADP + phosphate + H(+). It carries out the reaction L-glutamine + H2O = L-glutamate + NH4(+). Its pathway is purine metabolism; IMP biosynthesis via de novo pathway; 5-amino-1-(5-phospho-D-ribosyl)imidazole from N(2)-formyl-N(1)-(5-phospho-D-ribosyl)glycinamide: step 1/2. In terms of biological role, part of the phosphoribosylformylglycinamidine synthase complex involved in the purines biosynthetic pathway. Catalyzes the ATP-dependent conversion of formylglycinamide ribonucleotide (FGAR) and glutamine to yield formylglycinamidine ribonucleotide (FGAM) and glutamate. The FGAM synthase complex is composed of three subunits. PurQ produces an ammonia molecule by converting glutamine to glutamate. PurL transfers the ammonia molecule to FGAR to form FGAM in an ATP-dependent manner. PurS interacts with PurQ and PurL and is thought to assist in the transfer of the ammonia molecule from PurQ to PurL. This is Phosphoribosylformylglycinamidine synthase subunit PurQ from Ruegeria pomeroyi (strain ATCC 700808 / DSM 15171 / DSS-3) (Silicibacter pomeroyi).